The following is a 601-amino-acid chain: Potassium channel KAT2 (601 aa).

Residues 1–42 (METISNIFHNDPLPPLGARANQSIKLRKFIISPYDSRYRTWE) are Cytoplasmic-facing. A helical membrane pass occupies residues 43-63 (TFLLVLVVYSAWICPFELAYL). The Extracellular segment spans residues 64-71 (RNLSWKVS). A helical transmembrane segment spans residues 72-92 (LVDNIIDSFFAIDIILTFFLA). The Cytoplasmic portion of the chain corresponds to 93-112 (YLDQKSYLLVDDPKRIVARY). Residues 113-133 (FSSWFLFDVCSTIPYQLLGQI) form a helical membrane-spanning segment. The Extracellular portion of the chain corresponds to 134 to 144 (FKKHENGLAYR). A helical; Voltage-sensor transmembrane segment spans residues 145–165 (LLSMLRLWRLRRLSELFARLE). Over 166–179 (KDIRLNYYWIRCTK) the chain is Cytoplasmic. Residues 180-200 (LISVTLFAVHCSGCFNYLIAD) form a helical membrane-spanning segment. Over 201–227 (RYPNPARTWIGAAIPNYRSQNLWVRYV) the chain is Extracellular. An intramembrane region (pore-forming) is located at residues 228–247 (TAIYWSITTLTTTGYGDLHA). Residues 248-251 (ENQR) lie on the Extracellular side of the membrane. Residues 252–272 (EMLFSICYMLFNLGLTAYLIG) form a helical membrane-spanning segment. Residues 273 to 601 (NMTNLVVQGS…DGDHLFFMEI (329 aa)) are Cytoplasmic-facing. A nucleoside 3',5'-cyclic phosphate is bound at residue 356 to 475 (LFHGVSFTCM…RVILNNLSQK (120 aa)). Residues 530-601 (RVTIHMYSQR…DGDHLFFMEI (72 aa)) enclose the KHA domain.

This sequence belongs to the potassium channel family. Plant (TC 1.A.1.4) subfamily.

Its subcellular location is the membrane. Functionally, probable inward-rectifying potassium channel. Assuming opened or closed conformations in response to the voltage difference across the membrane, the channel is activated by hyperpolarization. This chain is Potassium channel KAT2, found in Oryza sativa subsp. japonica (Rice).